Reading from the N-terminus, the 159-residue chain is Xanthine dehydrogenase iron-sulfur-binding subunit (159 aa).

A 2Fe-2S ferredoxin-type domain is found at 7–82; it reads ITIECTINGM…GKEIRTLEGE (76 aa). Residues Cys44, Cys49, and Cys52 each coordinate [2Fe-2S] cluster.

As to quaternary structure, heterotrimer of XdhA, XdhB and XdhC. It depends on [2Fe-2S] cluster as a cofactor.

Its pathway is purine metabolism; hypoxanthine degradation; urate from hypoxanthine: step 1/2. Iron-sulfur subunit of the xanthine dehydrogenase complex. This Escherichia coli O157:H7 protein is Xanthine dehydrogenase iron-sulfur-binding subunit (xdhC).